Consider the following 139-residue polypeptide: Transcription antitermination protein NusB (139 aa).

It belongs to the NusB family.

Functionally, involved in transcription antitermination. Required for transcription of ribosomal RNA (rRNA) genes. Binds specifically to the boxA antiterminator sequence of the ribosomal RNA (rrn) operons. This Limosilactobacillus fermentum (strain NBRC 3956 / LMG 18251) (Lactobacillus fermentum) protein is Transcription antitermination protein NusB.